Reading from the N-terminus, the 506-residue chain is Sodium-coupled neutral amino acid symporter 2 (506 aa).

The segment at 1 to 23 (MKKAEMGRFNISPDEDSSSYSSN) is disordered. Over 1-76 (MKKAEMGRFN…HPGTTSFGMS (76 aa)) the chain is Cytoplasmic. The regulates protein turnover upon amino acid deprivation stretch occupies residues 1–96 (MKKAEMGRFN…SGILGLSYAM (96 aa)). Phosphoserine occurs at positions 12, 21, 22, and 55. Residues 77-96 (VFNLSNAIVGSGILGLSYAM) form a helical membrane-spanning segment. Asn-82 provides a ligand contact to Na(+). At 97 to 102 (ANTGIA) the chain is on the extracellular side. Residues 103–123 (LFIILLTFVSIFSLYSVHLLL) form a helical membrane-spanning segment. Over 124 to 158 (KTANEGGSLLYEQLGHKAFGMVGKLTASGSITMQN) the chain is Cytoplasmic. Residues 159 to 177 (IGAMSSYLFIVKYELPLVI) form a helical membrane-spanning segment. The Extracellular segment spans residues 178 to 188 (QALMNIEDTNG). A helical membrane pass occupies residues 189–209 (LWYLNGDYLVLLVSLVLILPL). Topologically, residues 210–217 (SLLRNLGY) are cytoplasmic. The chain crosses the membrane as a helical span at residues 218 to 238 (LGYTSGLSLLCMMFFLIVVIF). The Extracellular portion of the chain corresponds to 239–292 (KKFQISCPAEIAFLVNETVNSSLTQPATFLPDMGFNRTESDSCQPRYFIFNSQT). Cys-245 and Cys-281 are oxidised to a cystine. 2 N-linked (GlcNAc...) asparagine glycosylation sites follow: Asn-258 and Asn-274. Residues 293–313 (VYAVPILTFSFVCHPAILPIY) traverse the membrane as a helical segment. Residues 314–329 (EELKGRSRRRMMNVSK) are Cytoplasmic-facing. Residues 330-350 (ISFFAMFLMYLLAALFGYLTF) form a helical membrane-spanning segment. Over 351-371 (YGHVESELLHTYSSVMETDIL) the chain is Extracellular. Residues 372-392 (LLIVRLAVLVAVTLTVPVVIF) form a helical membrane-spanning segment. Thr-386 contributes to the Na(+) binding site. Over 393–413 (PIRSSITHLLCASKEFSWWRH) the chain is Cytoplasmic. Residues 414-434 (SVITVSILVFTNLLVIFVPNI) form a helical membrane-spanning segment. At 435 to 436 (RD) the chain is on the extracellular side. A helical transmembrane segment spans residues 437-457 (IFGFIGASAAAMLIFILPSAF). Topologically, residues 458–472 (YIKLVKKEPMKSVQK) are cytoplasmic. Residues 473–495 (IGAMFFLLSGIVVMTGSMALIVL) form a helical membrane-spanning segment. Residues 496–506 (DWVHNAPGGGH) are Extracellular-facing.

The protein belongs to the amino acid/polyamine transporter 2 family. In terms of processing, polyubiquitination by NEDD4L regulates the degradation and the activity of SLC38A2.

The protein localises to the cell membrane. It catalyses the reaction L-alanine(in) + Na(+)(in) = L-alanine(out) + Na(+)(out). The enzyme catalyses glycine(in) + Na(+)(in) = glycine(out) + Na(+)(out). The catalysed reaction is L-serine(in) + Na(+)(in) = L-serine(out) + Na(+)(out). It carries out the reaction L-proline(in) + Na(+)(in) = L-proline(out) + Na(+)(out). It catalyses the reaction L-methionine(in) + Na(+)(in) = L-methionine(out) + Na(+)(out). The enzyme catalyses L-histidine(in) + Na(+)(in) = L-histidine(out) + Na(+)(out). The catalysed reaction is L-asparagine(in) + Na(+)(in) = L-asparagine(out) + Na(+)(out). It carries out the reaction L-glutamine(in) + Na(+)(in) = L-glutamine(out) + Na(+)(out). It catalyses the reaction L-threonine(in) + Na(+)(in) = L-threonine(out) + Na(+)(out). The enzyme catalyses L-leucine(in) + Na(+)(in) = L-leucine(out) + Na(+)(out). The catalysed reaction is L-phenylalanine(in) + Na(+)(in) = L-phenylalanine(out) + Na(+)(out). With respect to regulation, inhibited by N-methyl-D-glucamine. Inhibited by choline. Allosteric regulation of sodium ions binding by pH. Symporter that cotransports neutral amino acids and sodium ions from the extracellular to the intracellular side of the cell membrane. The transport is pH-sensitive, Li(+)-intolerant, electrogenic, driven by the Na(+) electrochemical gradient and cotransports of neutral amino acids and sodium ions with a stoichiometry of 1:1. May function in the transport of amino acids at the blood-brain barrier. May function in the transport of amino acids in the supply of maternal nutrients to the fetus through the placenta. Maintains a key metabolic glutamine/glutamate balance underpinning retrograde signaling by dendritic release of the neurotransmitter glutamate. Transports L-proline in differentiating osteoblasts for the efficient synthesis of proline-enriched proteins and provides proline essential for osteoblast differentiation and bone formation during bone development. The protein is Sodium-coupled neutral amino acid symporter 2 of Bos taurus (Bovine).